A 176-amino-acid chain; its full sequence is Transmembrane protein 238 (176 aa).

Positions 1–22 are disordered; sequence MAAAPAVCASQGSPPGAPSAPA. At 1 to 36 the chain is on the cytoplasmic side; sequence MAAAPAVCASQGSPPGAPSAPAAAPAPAAGLGRCRM. Over residues 9 to 22 the composition is skewed to low complexity; sequence ASQGSPPGAPSAPA. A helical membrane pass occupies residues 37 to 57; sequence ALLLAVALDVAGMAALLTGVF. Over 58–69 the chain is Extracellular; that stretch reads AQLQVRGRDFGD. The helical transmembrane segment at 70 to 90 threads the bilayer; it reads LLIYSGALLVFLSLLGWILWY. The Cytoplasmic portion of the chain corresponds to 91 to 176; it reads TGNIEISRQE…GPGAAGAGSE (86 aa). Low complexity predominate over residues 124–137; that stretch reads SAPAAAGQRPAPGS. The tract at residues 124 to 157 is disordered; it reads SAPAAAGQRPAPGSRRARRAARAPPPPAAGSRRV. S175 carries the post-translational modification Phosphoserine.

The protein localises to the membrane. The protein is Transmembrane protein 238 (TMEM238) of Homo sapiens (Human).